Consider the following 161-residue polypeptide: Putative acetyltransferase SAV0762 (161 aa).

It belongs to the transferase hexapeptide repeat family.

The protein is Putative acetyltransferase SAV0762 of Staphylococcus aureus (strain Mu50 / ATCC 700699).